The chain runs to 660 residues: Phosphatidylinositol-3-phosphate phosphatase MTMR7 (660 aa).

The region spanning 126–504 (GWVLIDLSEE…FMYKFWSGMY (379 aa)) is the Myotubularin phosphatase domain. Positions 250, 275, and 276 each coordinate a 1,2-diacyl-sn-glycero-3-phospho-(1D-myo-inositol-3-phosphate). The Phosphocysteine intermediate role is filled by Cys338. A 1,2-diacyl-sn-glycero-3-phospho-(1D-myo-inositol-3-phosphate) contacts are provided by Ser339, Asp340, Gly341, Trp342, Asp343, Arg344, and Arg384. Residues 514–558 (RQSVTDYLMAVKEETQQLEEELEALEERLEKIQKVQLNCTKVKSK) are a coiled coil. Residues 554 to 660 (KVKSKQSEPS…DSDEAVFLTA (107 aa)) are disordered. Over residues 566–596 (SGFSTSDNSIANTPQDYSGNMKSFPSRSPSQ) the composition is skewed to polar residues. At Thr578 the chain carries Phosphothreonine. Residues 641-653 (APSEDSGKDRDSD) show a composition bias toward basic and acidic residues.

This sequence belongs to the protein-tyrosine phosphatase family. Non-receptor class myotubularin subfamily. In terms of assembly, heterodimer (via C-terminus) with MTMR9 (via coiled coil domain); the interaction enhances MTMR7 catalytic activity. Does not homodimerize. Interacts with RAB1B (in GDP-bound form).

It is found in the cytoplasm. The protein resides in the endomembrane system. The enzyme catalyses a 1,2-diacyl-sn-glycero-3-phospho-(1D-myo-inositol-3-phosphate) + H2O = a 1,2-diacyl-sn-glycero-3-phospho-(1D-myo-inositol) + phosphate. The catalysed reaction is 1D-myo-inositol 1,3-bisphosphate + H2O = 1D-myo-inositol 1-phosphate + phosphate. Interaction with MTMR9 increases phosphatase activity. Functionally, lipid phosphatase that specifically dephosphorylates the D-3 position of phosphatidylinositol 3-phosphate (PtdIns(3)P) and inositol 1,3-bisphosphate (Ins(1,3)P2). This chain is Phosphatidylinositol-3-phosphate phosphatase MTMR7, found in Pongo abelii (Sumatran orangutan).